Here is a 7260-residue protein sequence, read N- to C-terminus: Nonribosomal peptide synthetase ecdA (7260 aa).

Positions 4–80 (TNEMERKRVF…ELFETIQYLQ (77 aa)) constitute a Carrier 1 domain. Ser41 carries the post-translational modification O-(pantetheine 4'-phosphoryl)serine. A condensation 1 region spans residues 134–549 (EDVYPSTPLQ…SINEILTLPA (416 aa)). The adenylation 1 stretch occupies residues 575-965 (QDQVRSQPAA…DGSLLYVGRC (391 aa)). The 77-residue stretch at 1090-1166 (APSTAIEHKL…DLARELEGRN (77 aa)) folds into the Carrier 2 domain. Residue Ser1127 is modified to O-(pantetheine 4'-phosphoryl)serine. A condensation 2 region spans residues 1208–1628 (EDIIPCTAMQ…LGDLSLLSAD (421 aa)). Residues 1653–2054 (EEQITARPDS…GRRDTQIKIR (402 aa)) are adenylation 2. The 77-residue stretch at 2188-2264 (TPSTPTESQL…DLANLLSSRF (77 aa)) folds into the Carrier 3 domain. At Ser2225 the chain carries O-(pantetheine 4'-phosphoryl)serine. The segment at 2314–2719 (QDVYPCTPLQ…THVVQQLCDP (406 aa)) is condensation 3. An adenylation 3 region spans residues 2763–3156 (KQALAQPNAP…GRRDTQVKIR (394 aa)). The region spanning 3287–3365 (QPATEMEKML…ELAQVLEERV (79 aa)) is the Carrier 4 domain. An O-(pantetheine 4'-phosphoryl)serine modification is found at Ser3324. Residues 3417–3831 (VQDVYPCTPL…LLSPNDQQQI (415 aa)) are condensation 4. The tract at residues 3851–4248 (EEQAMAHPTK…SFVYVARRNT (398 aa)) is adenylation 4. The region spanning 4394-4471 (APATAMERTL…DLANLLADGA (78 aa)) is the Carrier 5 domain. Ser4431 is modified (O-(pantetheine 4'-phosphoryl)serine). Residues 4510-4910 (EDIYPATPLQ…HFVHVAEQLF (401 aa)) form a condensation 5 region. An adenylation 5 region spans residues 4955-5357 (ERAALQPNAP…GRRDLQVKIR (403 aa)). The region spanning 5496–5573 (APRTVMEQQV…DLALVLSERG (78 aa)) is the Carrier 6 domain. Residue Ser5533 is modified to O-(pantetheine 4'-phosphoryl)serine. Positions 5622–6043 (EDVYPCTPLQ…AVSEKDERQI (422 aa)) are condensation 6. The interval 6063-6460 (QEQVARTPGE…GRHDSQVKIR (398 aa)) is adenylation 6. The 77-residue stretch at 6592-6668 (APSTAMERQL…EVAQVVEDRV (77 aa)) folds into the Carrier 7 domain. Ser6629 carries the post-translational modification O-(pantetheine 4'-phosphoryl)serine. The tract at residues 6718 to 7133 (LPTTDFQALT…ILDSPGLLVS (416 aa)) is condensation 7. Residues 7241 to 7260 (CEEAEKSASVTSSERRLATI) are disordered.

The protein belongs to the NRP synthetase family.

The protein operates within antifungal biosynthesis. Functionally, nonribosomal peptide synthetase; part of the gene cluster that mediates the biosynthesis of echinocandin B, a fungal lipidated cyclic hexapeptide that acts as an antifungal agent. Linoleoyl-AMP, produced by the fatty-acyl-AMP ligase ecdI, is transferred to the initiation carrier domain (T0) of ecdA. The linoleoyl-S-phosphopantetheinyl-T0 is sequentially extended with L-ornithine, L-threonine, L-proline, L-homotyrosine, L-threonine, and 4R-methyl-L-proline to form the linear hexapeptide. Thereafter, the terminal condensation (C7) performs macrocyclization of the NRPS product and the cyclic scaffold is released from ecdA. All six of the amino acid residues are hydroxylated, including 4R,5R-dihydroxy-L-ornithine, 4R-hydroxyl-L-proline, 3S,4S-dihydroxy-L-homotyrosine, and 3S-hydroxyl-4S-methyl-L-prolin. In the pathway, all the hydroxylation reactions are proposed to occur following completion of the cyclic peptide, so the unhydroxylated precursor produced by ecdA will undergo six rounds of hydroxylation. Five hydroxylase genes (ecdG, ecdH, ecdK, htyE and htyF) are embedded within the echinocandin B (ecd) and L-homotyrosine (hty) clusters. The chain is Nonribosomal peptide synthetase ecdA from Aspergillus rugulosus (Emericella rugulosa).